Reading from the N-terminus, the 449-residue chain is Ribosomal protein uS12 methylthiotransferase RimO (449 aa).

An MTTase N-terminal domain is found at 5 to 116 (PTIAISHLGC…IVDVVQRVEN (112 aa)). Residues cysteine 14, cysteine 50, cysteine 79, cysteine 154, cysteine 158, and cysteine 161 each contribute to the [4Fe-4S] cluster site. The 230-residue stretch at 140–369 (TTTEGVAYLR…MEVQQPISIK (230 aa)) folds into the Radical SAM core domain. The 67-residue stretch at 372–438 (QNCIGQTVPV…VYDLYGKTNL (67 aa)) folds into the TRAM domain.

Belongs to the methylthiotransferase family. RimO subfamily. It depends on [4Fe-4S] cluster as a cofactor.

It is found in the cytoplasm. The catalysed reaction is L-aspartate(89)-[ribosomal protein uS12]-hydrogen + (sulfur carrier)-SH + AH2 + 2 S-adenosyl-L-methionine = 3-methylsulfanyl-L-aspartate(89)-[ribosomal protein uS12]-hydrogen + (sulfur carrier)-H + 5'-deoxyadenosine + L-methionine + A + S-adenosyl-L-homocysteine + 2 H(+). Its function is as follows. Catalyzes the methylthiolation of an aspartic acid residue of ribosomal protein uS12. The polypeptide is Ribosomal protein uS12 methylthiotransferase RimO (Rippkaea orientalis (strain PCC 8801 / RF-1) (Cyanothece sp. (strain PCC 8801))).